We begin with the raw amino-acid sequence, 397 residues long: Tryptophan synthase beta chain (397 aa).

Residue lysine 87 is modified to N6-(pyridoxal phosphate)lysine.

Belongs to the TrpB family. As to quaternary structure, tetramer of two alpha and two beta chains. Pyridoxal 5'-phosphate is required as a cofactor.

The enzyme catalyses (1S,2R)-1-C-(indol-3-yl)glycerol 3-phosphate + L-serine = D-glyceraldehyde 3-phosphate + L-tryptophan + H2O. The protein operates within amino-acid biosynthesis; L-tryptophan biosynthesis; L-tryptophan from chorismate: step 5/5. The beta subunit is responsible for the synthesis of L-tryptophan from indole and L-serine. The protein is Tryptophan synthase beta chain of Escherichia coli O157:H7.